Here is a 503-residue protein sequence, read N- to C-terminus: Na(+)-translocating NADH-quinone reductase subunit B (503 aa).

Helical transmembrane passes span 55–75 (MILVVVALFPATFSAIWNSGV), 120–142 (IFLPLLIISYSVGGACEVLFAVI), 161–181 (TLPPTIPYWMAALGIAFGVVV), and 186–206 (FGGTGMNILNPALSGRAFLFF). Residue Thr248 is modified to FMN phosphoryl threonine. The next 5 helical transmembrane spans lie at 361-381 (TSTFACLLGAIFLIVTGIASW), 387-407 (FGIGAFVTAWLFKIVSILIVG), 417-437 (FFIPAYRQLFLGGLAFGLVFM), 452-472 (WIYGLFIGFMTILIRLINPAY), and 475-495 (GVMLAILLGNVFAPLLDYFAV).

The protein belongs to the NqrB/RnfD family. As to quaternary structure, composed of six subunits; NqrA, NqrB, NqrC, NqrD, NqrE and NqrF. FMN is required as a cofactor.

Its subcellular location is the cell inner membrane. It catalyses the reaction a ubiquinone + n Na(+)(in) + NADH + H(+) = a ubiquinol + n Na(+)(out) + NAD(+). Functionally, NQR complex catalyzes the reduction of ubiquinone-1 to ubiquinol by two successive reactions, coupled with the transport of Na(+) ions from the cytoplasm to the periplasm. NqrA to NqrE are probably involved in the second step, the conversion of ubisemiquinone to ubiquinol. This Chlamydia felis (strain Fe/C-56) (Chlamydophila felis) protein is Na(+)-translocating NADH-quinone reductase subunit B.